An 837-amino-acid chain; its full sequence is Translation initiation factor IF-2 (837 aa).

The segment at 94 to 252 is disordered; that stretch reads QRSPEEIEAE…NAHGFQSPTG (159 aa). Over residues 96 to 136 the composition is skewed to basic and acidic residues; it reads SPEEIEAERKRELDERRAVENAARQKAEEEARVRAEEEARR. Residues 137-171 are compositionally biased toward low complexity; that stretch reads QPAAPSAPAEAVAAPAPVAEPVREAAPVVAAAPAA. Basic and acidic residues-rich tracts occupy residues 172–213 and 221–230; these read DTRK…EKAP and TTDEESDGFR. Over residues 231–244 the composition is skewed to basic residues; it reads RGGRGKAKLKKRNA. The tr-type G domain occupies 337-506; it reads PRAPVVTVMG…LLQAEVLELT (170 aa). The tract at residues 346 to 353 is G1; the sequence is GHVDHGKT. GTP is bound at residue 346 to 353; it reads GHVDHGKT. The tract at residues 371 to 375 is G2; it reads GITQH. Positions 392-395 are G3; it reads DTPG. GTP-binding positions include 392-396 and 446-449; these read DTPGH and NKID. A G4 region spans residues 446–449; it reads NKID. A G5 region spans residues 482–484; that stretch reads SAK.

Belongs to the TRAFAC class translation factor GTPase superfamily. Classic translation factor GTPase family. IF-2 subfamily.

Its subcellular location is the cytoplasm. Its function is as follows. One of the essential components for the initiation of protein synthesis. Protects formylmethionyl-tRNA from spontaneous hydrolysis and promotes its binding to the 30S ribosomal subunits. Also involved in the hydrolysis of GTP during the formation of the 70S ribosomal complex. The protein is Translation initiation factor IF-2 of Pseudomonas fluorescens (strain Pf0-1).